We begin with the raw amino-acid sequence, 139 residues long: QYVYPVLPYAPIHHYTVPVQVSTQYHAQDILGQFAFHHAGDNQVRTETKSFDGSVRGLYGYVDPTGKLVNVHYVADSNGFRVVGANNLPEAPSAPAVPDVKGPEPVQDTPEVVAARAAFQKSYDEAAQAAAVSPDVQVS.

Glutamine 1 is subject to Pyrrolidone carboxylic acid. The 62-residue stretch at 31 to 92 folds into the Chitin-binding type R&amp;R domain; it reads LGQFAFHHAG…VGANNLPEAP (62 aa).

The chain is Cuticle protein 6 from Blaberus craniifer (Death's head cockroach).